The following is a 420-amino-acid chain: Glucose-1-phosphate adenylyltransferase 2 (420 aa).

Alpha-D-glucose 1-phosphate is bound by residues Tyr-109, Gly-175, 190–191 (EK), and Ser-208.

Belongs to the bacterial/plant glucose-1-phosphate adenylyltransferase family. As to quaternary structure, homotetramer.

The catalysed reaction is alpha-D-glucose 1-phosphate + ATP + H(+) = ADP-alpha-D-glucose + diphosphate. Its pathway is glycan biosynthesis; glycogen biosynthesis. Involved in the biosynthesis of ADP-glucose, a building block required for the elongation reactions to produce glycogen. Catalyzes the reaction between ATP and alpha-D-glucose 1-phosphate (G1P) to produce pyrophosphate and ADP-Glc. The sequence is that of Glucose-1-phosphate adenylyltransferase 2 from Pseudoalteromonas atlantica (strain T6c / ATCC BAA-1087).